Consider the following 213-residue polypeptide: Pyridoxine/pyridoxamine 5'-phosphate oxidase (213 aa).

Substrate contacts are provided by residues 8–11 (RKNY) and K66. Residues 61–66 (RIVLIK), 76–77 (FT), R82, K83, and Q105 contribute to the FMN site. Residues Y123, R127, and S131 each contribute to the substrate site. FMN is bound by residues 140 to 141 (QS) and W184. Residue 190-192 (RLH) participates in substrate binding. Residue R194 participates in FMN binding.

The protein belongs to the pyridoxamine 5'-phosphate oxidase family. Homodimer. FMN serves as cofactor.

It catalyses the reaction pyridoxamine 5'-phosphate + O2 + H2O = pyridoxal 5'-phosphate + H2O2 + NH4(+). The catalysed reaction is pyridoxine 5'-phosphate + O2 = pyridoxal 5'-phosphate + H2O2. Its pathway is cofactor metabolism; pyridoxal 5'-phosphate salvage; pyridoxal 5'-phosphate from pyridoxamine 5'-phosphate: step 1/1. It functions in the pathway cofactor metabolism; pyridoxal 5'-phosphate salvage; pyridoxal 5'-phosphate from pyridoxine 5'-phosphate: step 1/1. Functionally, catalyzes the oxidation of either pyridoxine 5'-phosphate (PNP) or pyridoxamine 5'-phosphate (PMP) into pyridoxal 5'-phosphate (PLP). This Paraburkholderia xenovorans (strain LB400) protein is Pyridoxine/pyridoxamine 5'-phosphate oxidase.